The following is a 1093-amino-acid chain: Leukemia inhibitory factor receptor (1093 aa).

The N-terminal stretch at 1–43 is a signal peptide; the sequence is MGAFSWWRQPSWMADNKRGRMTPSLPWLLSALTLLHLMMHVNG. Topologically, residues 44-829 are extracellular; the sequence is LKRGVQQDLK…SMFVVTKENS (786 aa). The 83-residue stretch at 45-127 folds into the Fibronectin type-III 1 domain; that stretch reads KRGVQQDLKC…QSKFTLNEKD (83 aa). Disulfide bonds link cysteine 54–cysteine 64 and cysteine 81–cysteine 89. Residues asparagine 165, asparagine 200, asparagine 239, and asparagine 262 are each glycosylated (N-linked (GlcNAc...) asparagine). 2 disulfide bridges follow: cysteine 209/cysteine 266 and cysteine 337/cysteine 347. Fibronectin type-III domains lie at 331–428, 431–530, 534–625, 623–715, and 720–829; these read VPQK…ERVA, VPIS…TEAT, GPDT…IPND, PNDD…IGYI, and PIVA…KENS. Residues asparagine 386, asparagine 403, asparagine 422, asparagine 441, asparagine 454, and asparagine 477 are each glycosylated (N-linked (GlcNAc...) asparagine). The cysteines at positions 462 and 507 are disulfide-linked. Residues 515–519 carry the WSXWS motif motif; the sequence is WSKWS. Residues asparagine 568, asparagine 648, asparagine 659, asparagine 676, asparagine 725, and asparagine 783 are each glycosylated (N-linked (GlcNAc...) asparagine). Residues 830–850 form a helical membrane-spanning segment; that stretch reads VGLIIAILIPVAVAVIVGVVT. The Cytoplasmic portion of the chain corresponds to 851 to 1093; that stretch reads SILCYRKREW…TNFFQNKPND (243 aa). The Box 1 motif motif lies at 865–873; that stretch reads FYPDIPNPE. Disordered regions lie at residues 908–941 and 1003–1093; these read ESRSIPPKIEDTEITSPVSERPGESSETDPENQA and LPIN…KPND. Serine 923 and serine 1040 each carry phosphoserine. Polar residues-rich tracts occupy residues 1028 to 1063 and 1082 to 1093; these read ANVNTWNLVSPDSPRSTDSNSEVVSFGSPCSINSRQ and SFTNFFQNKPND.

This sequence belongs to the type I cytokine receptor family. Type 2 subfamily. Heterodimer composed of LIFR and IL6ST. The heterodimer formed by LIFR and IL6ST interacts with the complex formed by CNTF and CNTFR.

It localises to the cell membrane. In terms of biological role, signal-transducing molecule. May have a common pathway with IL6ST. The soluble form inhibits the biological activity of LIF by blocking its binding to receptors on target cells. This is Leukemia inhibitory factor receptor (Lifr) from Rattus norvegicus (Rat).